The chain runs to 468 residues: Putrescine aminotransferase (468 aa).

Residues glycine 150–threonine 151 and glutamine 274 contribute to the pyridoxal 5'-phosphate site. The residue at position 300 (lysine 300) is an N6-(pyridoxal phosphate)lysine. A pyridoxal 5'-phosphate-binding site is contributed by threonine 332.

Belongs to the class-III pyridoxal-phosphate-dependent aminotransferase family. Putrescine aminotransferase subfamily. The cofactor is pyridoxal 5'-phosphate.

The catalysed reaction is an alkane-alpha,omega-diamine + 2-oxoglutarate = an omega-aminoaldehyde + L-glutamate. It catalyses the reaction putrescine + 2-oxoglutarate = 1-pyrroline + L-glutamate + H2O. The enzyme catalyses cadaverine + 2-oxoglutarate = 5-aminopentanal + L-glutamate. It participates in amine and polyamine degradation; putrescine degradation; 4-aminobutanal from putrescine (transaminase route): step 1/1. Functionally, catalyzes the aminotransferase reaction from putrescine to 2-oxoglutarate, leading to glutamate and 4-aminobutanal, which spontaneously cyclizes to form 1-pyrroline. This is the first step in one of two pathways for putrescine degradation, where putrescine is converted into 4-aminobutanoate (gamma-aminobutyrate or GABA) via 4-aminobutanal. Also functions as a cadaverine transaminase in a a L-lysine degradation pathway to succinate that proceeds via cadaverine, glutarate and L-2-hydroxyglutarate. The sequence is that of Putrescine aminotransferase from Pectobacterium atrosepticum (strain SCRI 1043 / ATCC BAA-672) (Erwinia carotovora subsp. atroseptica).